The primary structure comprises 476 residues: UDP-N-acetylmuramoylalanine--D-glutamate ligase (476 aa).

122 to 128 (GSNAKST) contributes to the ATP binding site.

Belongs to the MurCDEF family.

The protein localises to the cytoplasm. It catalyses the reaction UDP-N-acetyl-alpha-D-muramoyl-L-alanine + D-glutamate + ATP = UDP-N-acetyl-alpha-D-muramoyl-L-alanyl-D-glutamate + ADP + phosphate + H(+). The protein operates within cell wall biogenesis; peptidoglycan biosynthesis. Cell wall formation. Catalyzes the addition of glutamate to the nucleotide precursor UDP-N-acetylmuramoyl-L-alanine (UMA). The sequence is that of UDP-N-acetylmuramoylalanine--D-glutamate ligase from Psychrobacter arcticus (strain DSM 17307 / VKM B-2377 / 273-4).